Here is a 207-residue protein sequence, read N- to C-terminus: Protein FAM177A1 (207 aa).

M1 is subject to N-acetylmethionine. Phosphoserine is present on S65. The residue at position 66 (T66) is a Phosphothreonine. Residues 131–170 (IDEYYRMKKEEEEEEEENRMSEEAERQYQQNKLQADSIVQ) adopt a coiled-coil conformation. The segment at 142–176 (EEEEEENRMSEEAERQYQQNKLQADSIVQTDQPET) is disordered. Residues 157 to 176 (QYQQNKLQADSIVQTDQPET) show a composition bias toward polar residues.

Belongs to the FAM177 family.

The chain is Protein FAM177A1 (Fam177a1) from Mus musculus (Mouse).